The following is a 73-amino-acid chain: Small ribosomal subunit protein eS27 (73 aa).

Cys28, Cys31, Cys47, and Cys50 together coordinate Zn(2+). The segment at Cys28–Cys50 adopts a C4-type zinc-finger fold.

Belongs to the eukaryotic ribosomal protein eS27 family. In terms of assembly, part of the 30S ribosomal subunit. Zn(2+) serves as cofactor.

This chain is Small ribosomal subunit protein eS27, found in Methanopyrus kandleri (strain AV19 / DSM 6324 / JCM 9639 / NBRC 100938).